We begin with the raw amino-acid sequence, 212 residues long: NAD(P)H-hydrate epimerase (212 aa).

One can recognise a YjeF N-terminal domain in the interval 10–212 (MRSLERAAIA…IGVIVKPIGL (203 aa)). 65-69 (NNGGD) is a (6S)-NADPHX binding site. The K(+) site is built by asparagine 66 and aspartate 129. (6S)-NADPHX contacts are provided by residues 133–139 (GLGLTRP) and aspartate 161. Residue serine 164 coordinates K(+).

The protein belongs to the NnrE/AIBP family. Requires K(+) as cofactor.

It carries out the reaction (6R)-NADHX = (6S)-NADHX. It catalyses the reaction (6R)-NADPHX = (6S)-NADPHX. Its function is as follows. Catalyzes the epimerization of the S- and R-forms of NAD(P)HX, a damaged form of NAD(P)H that is a result of enzymatic or heat-dependent hydration. This is a prerequisite for the S-specific NAD(P)H-hydrate dehydratase to allow the repair of both epimers of NAD(P)HX. The polypeptide is NAD(P)H-hydrate epimerase (Rhodobacter capsulatus (strain ATCC BAA-309 / NBRC 16581 / SB1003)).